Here is a 30-residue protein sequence, read N- to C-terminus: Cyclotide cter-P (30 aa).

The segment at residues 1–30 (GIPCGESCVFIPCITAAIGCSCKSKVCYRN) is a cross-link (cyclopeptide (Gly-Asn)). 3 disulfide bridges follow: cysteine 4/cysteine 20, cysteine 8/cysteine 22, and cysteine 13/cysteine 27.

This is a cyclic peptide.

It is found in the secreted. Probably participates in a plant defense mechanism. This chain is Cyclotide cter-P, found in Clitoria ternatea (Butterfly pea).